A 58-amino-acid polypeptide reads, in one-letter code: Ribulose bisphosphate carboxylase large chain (58 aa).

The propeptide occupies 1 to 2 (MS). Position 3 is an N-acetylproline (proline 3). At lysine 14 the chain carries N6,N6,N6-trimethyllysine.

The protein belongs to the RuBisCO large chain family. Type I subfamily. As to quaternary structure, heterohexadecamer of 8 large chains and 8 small chains.

It localises to the plastid. The protein resides in the chloroplast. It carries out the reaction 2 (2R)-3-phosphoglycerate + 2 H(+) = D-ribulose 1,5-bisphosphate + CO2 + H2O. It catalyses the reaction D-ribulose 1,5-bisphosphate + O2 = 2-phosphoglycolate + (2R)-3-phosphoglycerate + 2 H(+). In terms of biological role, ruBisCO catalyzes two reactions: the carboxylation of D-ribulose 1,5-bisphosphate, the primary event in carbon dioxide fixation, as well as the oxidative fragmentation of the pentose substrate in the photorespiration process. Both reactions occur simultaneously and in competition at the same active site. The chain is Ribulose bisphosphate carboxylase large chain (rbcL) from Weinmannia silvicola (Towai).